We begin with the raw amino-acid sequence, 242 residues long: Biosynthetic peptidoglycan transglycosylase (242 aa).

Residues 19–39 form a helical membrane-spanning segment; that stretch reads LMVVLAIFWGGGIALFSVAPV.

This sequence belongs to the glycosyltransferase 51 family.

Its subcellular location is the cell inner membrane. It catalyses the reaction [GlcNAc-(1-&gt;4)-Mur2Ac(oyl-L-Ala-gamma-D-Glu-L-Lys-D-Ala-D-Ala)](n)-di-trans,octa-cis-undecaprenyl diphosphate + beta-D-GlcNAc-(1-&gt;4)-Mur2Ac(oyl-L-Ala-gamma-D-Glu-L-Lys-D-Ala-D-Ala)-di-trans,octa-cis-undecaprenyl diphosphate = [GlcNAc-(1-&gt;4)-Mur2Ac(oyl-L-Ala-gamma-D-Glu-L-Lys-D-Ala-D-Ala)](n+1)-di-trans,octa-cis-undecaprenyl diphosphate + di-trans,octa-cis-undecaprenyl diphosphate + H(+). It participates in cell wall biogenesis; peptidoglycan biosynthesis. In terms of biological role, peptidoglycan polymerase that catalyzes glycan chain elongation from lipid-linked precursors. The sequence is that of Biosynthetic peptidoglycan transglycosylase from Escherichia coli O127:H6 (strain E2348/69 / EPEC).